We begin with the raw amino-acid sequence, 540 residues long: Putative laccase-11 (540 aa).

Plastocyanin-like domains are found at residues 1 to 114, 124 to 279, and 389 to 523; these read MATV…PPRG, REVP…YYGA, and NFPA…NDGP. H48, H50, H93, and H95 together coordinate Cu cation. Cu cation contacts are provided by H440, H443, H445, H502, C503, H504, and H508.

Belongs to the multicopper oxidase family. The cofactor is Cu cation.

The protein localises to the secreted. The protein resides in the extracellular space. It is found in the apoplast. It catalyses the reaction 4 hydroquinone + O2 = 4 benzosemiquinone + 2 H2O. Functionally, lignin degradation and detoxification of lignin-derived products. The polypeptide is Putative laccase-11 (LAC11) (Oryza sativa subsp. japonica (Rice)).